A 59-amino-acid chain; its full sequence is Large ribosomal subunit protein bL32c (59 aa).

The disordered stretch occupies residues 1 to 20 (MAVPKKRTSKSKKRIRKSVW).

The protein belongs to the bacterial ribosomal protein bL32 family.

The protein localises to the plastid. The protein resides in the chloroplast. The sequence is that of Large ribosomal subunit protein bL32c from Angiopteris evecta (Mule's foot fern).